A 189-amino-acid chain; its full sequence is Accessory gene regulator protein B (189 aa).

A run of 5 helical transmembrane segments spans residues 50–70 (VSLLCHMFLYTLTVHLTFFFI), 83–103 (LLCYIQSVIYFVLLPWIVGYV), 105–125 (VSSLIMYTLALVGLIIISIYA), 143–163 (KIKAICLTLIFLLISLFLNEP), and 164–184 (YQQLMLLGIVIISILQFPIFF).

This sequence belongs to the AgrB family.

The protein localises to the cell membrane. Its function is as follows. Essential for the production of a quorum sensing system signal molecule, the autoinducing peptide (AIP). This quorum sensing system is responsible for the regulation of the expression of virulence factor genes. Involved in the proteolytic processing of AgrD, the precursor of AIP. The protein is Accessory gene regulator protein B of Staphylococcus saprophyticus subsp. saprophyticus (strain ATCC 15305 / DSM 20229 / NCIMB 8711 / NCTC 7292 / S-41).